Reading from the N-terminus, the 296-residue chain is Tyrosine recombinase XerC (296 aa).

A Core-binding (CB) domain is found at 2-85 (ADQASWLERF…ALKQFGQFLL (84 aa)). A Tyr recombinase domain is found at 106 to 285 (TLPKNLDPDS…DFQHLAKVYD (180 aa)). Catalysis depends on residues arginine 145, lysine 169, histidine 237, arginine 240, and histidine 263. The active-site O-(3'-phospho-DNA)-tyrosine intermediate is the tyrosine 272.

Belongs to the 'phage' integrase family. XerC subfamily. In terms of assembly, forms a cyclic heterotetrameric complex composed of two molecules of XerC and two molecules of XerD.

It localises to the cytoplasm. Functionally, site-specific tyrosine recombinase, which acts by catalyzing the cutting and rejoining of the recombining DNA molecules. The XerC-XerD complex is essential to convert dimers of the bacterial chromosome into monomers to permit their segregation at cell division. It also contributes to the segregational stability of plasmids. This Shewanella amazonensis (strain ATCC BAA-1098 / SB2B) protein is Tyrosine recombinase XerC.